Reading from the N-terminus, the 1905-residue chain is Bromodomain adjacent to zinc finger domain protein 2A (1905 aa).

2 disordered regions span residues 1-59 and 362-434; these read MEME…NGLS and TSIF…PTTS. Polar residues-rich tracts occupy residues 35-59, 379-391, and 399-420; these read TNGS…NGLS, LQDN…NGSD, and TQSS…STIQ. Threonine 507 bears the Phosphothreonine mark. Serine 509 bears the Phosphoserine mark. The 72-residue stretch at 546–617 folds into the MBD domain; sequence IATPEEVRLP…EHFSFSPRMP (72 aa). The residue at position 548 (threonine 548) is a Phosphothreonine. A Phosphoserine modification is found at serine 613. The tract at residues 648-792 is disordered; sequence ITGKRGRPRN…KEKEEVTKAK (145 aa). DNA-binding regions (a.T hook) lie at residues 649-661 and 670-682; these read TGKR…TEKA and KRGR…VKIT. The segment covering 656-668 has biased composition (basic and acidic residues); sequence RNTEKAKTKEVPK. Basic residues predominate over residues 669-678; sequence VKRGRGRPPK. Lysine 680 bears the N6-acetyllysine; by KAT8 mark. The segment covering 686-709 has biased composition (basic and acidic residues); sequence NKTDNRPLKKLEAQETLNEEDKAK. The stretch at 693 to 792 forms a coiled coil; it reads LKKLEAQETL…KEKEEVTKAK (100 aa). Over residues 710-721 the composition is skewed to basic residues; that stretch reads IAKSKKKMRQKV. Positions 725-734 are enriched in polar residues; sequence ECQTTIQGQA. Basic and acidic residues-rich tracts occupy residues 739-748 and 756-792; these read KQETKSLKQK and AEKE…TKAK. At lysine 799 the chain carries N6-acetyllysine. One can recognise a DDT domain in the interval 848–913; sequence SGAFSDCLTI…LKAALHDPGF (66 aa). Lysine 866 participates in a covalent cross-link: Glycyl lysine isopeptide (Lys-Gly) (interchain with G-Cter in SUMO2). Serine 1051 carries the phosphoserine modification. Glycyl lysine isopeptide (Lys-Gly) (interchain with G-Cter in SUMO2) cross-links involve residues lysine 1150 and lysine 1172. Disordered regions lie at residues 1178–1220, 1283–1318, and 1330–1412; these read SNTT…PQAQ, LSSS…SSPD, and MPCN…RPPS. Residue serine 1184 is modified to Phosphoserine. Residues 1186-1198 constitute a DNA-binding region (a.T hook 3); sequence ARARGRPRKTKPG. The span at 1283–1293 shows a compositional bias: low complexity; that stretch reads LSSSVLTPDSS. Positions 1306 to 1315 are enriched in acidic residues; that stretch reads EEPEPDEAES. Residues 1345-1359 show a composition bias toward polar residues; sequence DQPTPSPQQLASSKP. Serine 1397 is modified (phosphoserine). Positions 1404–1416 form a DNA-binding region, a.T hook 4; that stretch reads PKRRGRPPSKFFK. At serine 1559 the chain carries Phosphoserine. Glycyl lysine isopeptide (Lys-Gly) (interchain with G-Cter in SUMO2) cross-links involve residues lysine 1676 and lysine 1709. Residues 1676–1726 form a PHD-type zinc finger; sequence KVTCLVCRKGDNDEFLLLCDGCDRGCHIYCHRPKMEAVPEGDWFCTVCLAQ. 2 disordered regions span residues 1734 to 1755 and 1769 to 1789; these read QKPG…NFSE and ESPA…KRRR. 4 positions are modified to phosphoserine: serine 1747, serine 1770, serine 1783, and serine 1785. The Bromo domain maps to 1793–1897; that stretch reads RNHHSDLTFC…RFFESRWEEF (105 aa).

The protein belongs to the WAL family. In terms of assembly, component of the NoRC-1 ISWI chromatin remodeling complex at least composed of SMARCA1 and BAZ2A/TIP5, which regulates the spacing of histone octamers on the DNA template to facilitate access to DNA. Within the NoRC-1 ISWI chromatin remodeling complex interacts with SMARCA1; the interaction is direct. Component of the NoRC-5 ISWI chromatin remodeling complex (also called the NoRC nucleolar-remodeling complex), at least composed of SMARCA5/SNF2H and BAZ2A/TIP5, which regulates the spacing of histone octamers on the DNA template to facilitate access to DNA. Within the NoRC-5 ISWI chromatin remodeling complexes interacts with SMARCA5/SNF2H; the interaction is direct. Interacts with TTF1; the interaction is required for recruitment of the NoRC-5 ISWI chromatin remodeling complex to rDNA. Interacts with HDAC1. Interacts with SIN3A. Interacts with DNMT1 and DNM3B. Interacts with BEND3 and USP21. Acetylation at Lys-680 by KAT8/MOF promotes its dissociation from pRNA, affecting heterochromatin formation, nucleosome positioning and rDNA silencing. Deacetylation by SIRT1 in late S phase enhances pRNA-binding, allowing de novo DNA methylation and heterochromatin formation. Acetylation is high during S phase and declines to background levels in late S phase when the silent copies of rRNA genes are replicated. Post-translationally, ubiquitinated. Deubiquitinated by USP21 leading to its stabilization. Expressed at moderate levels in most tissues analyzed, including heart, brain, placenta, lung, skeletal muscle, kidney and pancreas.

The protein resides in the nucleus. It is found in the nucleolus. Its function is as follows. Regulatory subunit of the ATP-dependent NoRC-1 and NoRC-5 ISWI chromatin remodeling complexes, which form ordered nucleosome arrays on chromatin and facilitate access to DNA during DNA-templated processes such as DNA replication, transcription, and repair. Both complexes regulate the spacing of nucleosomes along the chromatin and have the ability to slide mononucleosomes to the center of a DNA template. Directly stimulates the ATPase activity of SMARCA5 in the NoRC-5 ISWI chromatin remodeling complex. The NoRC-1 ISWI chromatin remodeling complex has a lower ATP hydrolysis rate than the NoRC-5 ISWI chromatin remodeling complex. Within the NoRC-5 ISWI chromatin remodeling complex, mediates silencing of a fraction of rDNA by recruiting histone-modifying enzymes and DNA methyltransferases, leading to heterochromatin formation and transcriptional silencing. In the complex, it plays a central role by being recruited to rDNA and by targeting chromatin modifying enzymes such as HDAC1, leading to repress RNA polymerase I transcription. Recruited to rDNA via its interaction with TTF1 and its ability to recognize and bind histone H4 acetylated on 'Lys-16' (H4K16ac), leading to deacetylation of H4K5ac, H4K8ac, H4K12ac but not H4K16ac. Specifically binds pRNAs, 150-250 nucleotide RNAs that are complementary in sequence to the rDNA promoter; pRNA-binding is required for heterochromatin formation and rDNA silencing. The polypeptide is Bromodomain adjacent to zinc finger domain protein 2A (BAZ2A) (Homo sapiens (Human)).